Here is a 384-residue protein sequence, read N- to C-terminus: Methylthioribose-1-phosphate isomerase (384 aa).

Catalysis depends on Asp-255, which acts as the Proton donor.

It belongs to the eIF-2B alpha/beta/delta subunits family. MtnA subfamily.

It is found in the cytoplasm. The protein resides in the nucleus. It catalyses the reaction 5-(methylsulfanyl)-alpha-D-ribose 1-phosphate = 5-(methylsulfanyl)-D-ribulose 1-phosphate. It functions in the pathway amino-acid biosynthesis; L-methionine biosynthesis via salvage pathway; L-methionine from S-methyl-5-thio-alpha-D-ribose 1-phosphate: step 1/6. In terms of biological role, catalyzes the interconversion of methylthioribose-1-phosphate (MTR-1-P) into methylthioribulose-1-phosphate (MTRu-1-P). The chain is Methylthioribose-1-phosphate isomerase (mri1) from Talaromyces stipitatus (strain ATCC 10500 / CBS 375.48 / QM 6759 / NRRL 1006) (Penicillium stipitatum).